The chain runs to 105 residues: uncharacterized protein (105 aa).

The protein localises to the plastid. This is an uncharacterized protein from Euglena longa (Euglenophycean alga).